The sequence spans 355 residues: Guanine nucleotide-binding protein G(i) subunit alpha-2 (355 aa).

Residue Gly2 is the site of N-myristoyl glycine attachment. Residue Cys3 is the site of S-palmitoyl cysteine attachment. Positions 32 to 355 (REVKLLLLGA…KNNLKDCGLF (324 aa)) constitute a G-alpha domain. Positions 35-48 (KLLLLGAGESGKST) are G1 motif. GTP-binding positions include 40-47 (GAGESGKS), 176-182 (LRTRVKT), 201-205 (DVGGQ), 270-273 (NKKD), and Ala327. Residues Ser47 and Thr182 each coordinate Mg(2+). Positions 174–182 (DVLRTRVKT) are G2 motif. Residues 197 to 206 (FKMFDVGGQR) form a G3 motif region. Residues 266 to 273 (ILFLNKKD) are G4 motif. The tract at residues 325–330 (TCATDT) is G5 motif.

This sequence belongs to the G-alpha family. G(i/o/t/z) subfamily. G proteins are composed of 3 units; alpha, beta and gamma. The alpha chain contains the guanine nucleotide binding site. In this context, interacts with GNB2. Interacts with UNC5B. Interacts with GPSM1. Interacts with RGS12 and RGS14. Interacts (inactive GDP-bound form) with NUCB1 (via GBA motif); the interaction leads to activation of GNAI3. Interacts (inactive GDP-bound form) with CCDC88C/DAPLE (via GBA motif). Interacts (inactive GDP-bound form) with CCDC8A/GIV (via GBA motif). Ubiquitously expressed. Most abundant in the lung and in the spleen.

The protein localises to the cytoplasm. Its subcellular location is the cytoskeleton. It localises to the microtubule organizing center. It is found in the centrosome. The protein resides in the cell membrane. The protein localises to the membrane. In terms of biological role, guanine nucleotide-binding proteins (G proteins) are involved as modulators or transducers in various transmembrane signaling systems. The G(i) proteins are involved in hormonal regulation of adenylate cyclase: they inhibit the cyclase in response to beta-adrenergic stimuli. May play a role in cell division. The chain is Guanine nucleotide-binding protein G(i) subunit alpha-2 (GNAI2) from Cavia porcellus (Guinea pig).